The primary structure comprises 480 residues: tRNA-2-methylthio-N(6)-dimethylallyladenosine synthase (480 aa).

The MTTase N-terminal domain occupies 29–145 (GSFWIQTFGC…LEALLTQVDN (117 aa)). The [4Fe-4S] cluster site is built by C38, C74, C108, C180, C184, and C187. The Radical SAM core domain maps to 166–403 (RDSTICAWVN…NALVERIALQ (238 aa)). A TRAM domain is found at 406-474 (SRYSGKVEQV…AFSLSGTPCE (69 aa)).

Belongs to the methylthiotransferase family. MiaB subfamily. Monomer. [4Fe-4S] cluster is required as a cofactor.

The protein localises to the cytoplasm. The enzyme catalyses N(6)-dimethylallyladenosine(37) in tRNA + (sulfur carrier)-SH + AH2 + 2 S-adenosyl-L-methionine = 2-methylsulfanyl-N(6)-dimethylallyladenosine(37) in tRNA + (sulfur carrier)-H + 5'-deoxyadenosine + L-methionine + A + S-adenosyl-L-homocysteine + 2 H(+). Catalyzes the methylthiolation of N6-(dimethylallyl)adenosine (i(6)A), leading to the formation of 2-methylthio-N6-(dimethylallyl)adenosine (ms(2)i(6)A) at position 37 in tRNAs that read codons beginning with uridine. In Prochlorococcus marinus (strain MIT 9313), this protein is tRNA-2-methylthio-N(6)-dimethylallyladenosine synthase.